The primary structure comprises 102 residues: Virulence plasmid protein pGP4-D (102 aa).

This Chlamydia trachomatis serovar L2 (strain ATCC VR-902B / DSM 19102 / 434/Bu) protein is Virulence plasmid protein pGP4-D.